A 292-amino-acid polypeptide reads, in one-letter code: Cyclin-dependent-like kinase 5 (292 aa).

A Protein kinase domain is found at 4–286; sequence YDKMEKIGEG…ADAALRHAYF (283 aa). Residues 10–18 and K33 contribute to the ATP site; that span reads IGEGTYGTV. D126 serves as the catalytic Proton acceptor. Residues N131 and D144 each contribute to the Mg(2+) site.

This sequence belongs to the protein kinase superfamily. CMGC Ser/Thr protein kinase family. CDC2/CDKX subfamily. Heterodimer composed of a catalytic subunit cdk-5 and a regulatory subunit cdka-1. Interaction with cdka-1 is required for cdk-5 activation. It depends on Mg(2+) as a cofactor.

It is found in the cytoplasm. The protein localises to the cell projection. It localises to the dendrite. It catalyses the reaction L-seryl-[protein] + ATP = O-phospho-L-seryl-[protein] + ADP + H(+). The enzyme catalyses L-threonyl-[protein] + ATP = O-phospho-L-threonyl-[protein] + ADP + H(+). Proline-directed serine/threonine-protein kinase which, in several motor neurons, promotes the polarized trafficking of synaptic vesicles and dense-core vesicles (DCV). In the ventral nerve cord, phosphorylates lin-10 and thereby prevents lin-10-mediated anterograde trafficking of the glutamate receptor glr-1. Involved in the inhibition of glr-1 trafficking in hypoxic conditions. In DA motor neurons but not in DB motor neurons, regulates axonal transport of synaptic vesicle precursors by inhibiting dynein-mediated retrograde transport. Regulates the trafficking of dense-core vesicles in DA and DB motor neurons by promoting anterograde trafficking to the axon and preventing dynein-dependent trafficking to the dendrite. May regulate these processes in association with cdka-1/p35. Activity may be regulated by cyy-1. Involved in synapse formation during DD motor neuron remodeling by regulating transport of disassembled synaptic material to the new synaptic sites probably by activating the motor protein unc-104/kinesin-3. Regulates microtubule polarity in the dendrite of DB motor neurons. May also play a role in GABAergic synaptic vesicle localization in the ventral nerve cord. This Caenorhabditis elegans protein is Cyclin-dependent-like kinase 5.